Here is a 76-residue protein sequence, read N- to C-terminus: Sec-independent protein translocase protein TatA (76 aa).

Residues 1–21 (MGGLSIWHWLIVLLIVALVFG) traverse the membrane as a helical segment. The segment at 43-76 (MKEGEAPADAQQLPRSGSVDVNAKETTRSDSNKA) is disordered. Residues 64–76 (NAKETTRSDSNKA) show a composition bias toward basic and acidic residues.

The protein belongs to the TatA/E family. As to quaternary structure, the Tat system comprises two distinct complexes: a TatABC complex, containing multiple copies of TatA, TatB and TatC subunits, and a separate TatA complex, containing only TatA subunits. Substrates initially bind to the TatABC complex, which probably triggers association of the separate TatA complex to form the active translocon.

The protein resides in the cell inner membrane. Functionally, part of the twin-arginine translocation (Tat) system that transports large folded proteins containing a characteristic twin-arginine motif in their signal peptide across membranes. TatA could form the protein-conducting channel of the Tat system. The chain is Sec-independent protein translocase protein TatA from Burkholderia lata (strain ATCC 17760 / DSM 23089 / LMG 22485 / NCIMB 9086 / R18194 / 383).